The sequence spans 193 residues: Large ribosomal subunit protein uL5 (193 aa).

The protein belongs to the universal ribosomal protein uL5 family. In terms of assembly, part of the 50S ribosomal subunit; part of the 5S rRNA/L5/L18/L25 subcomplex. Contacts the 5S rRNA and the P site tRNA. Forms a bridge to the 30S subunit in the 70S ribosome.

Functionally, this is one of the proteins that bind and probably mediate the attachment of the 5S RNA into the large ribosomal subunit, where it forms part of the central protuberance. In the 70S ribosome it contacts protein S13 of the 30S subunit (bridge B1b), connecting the 2 subunits; this bridge is implicated in subunit movement. Contacts the P site tRNA; the 5S rRNA and some of its associated proteins might help stabilize positioning of ribosome-bound tRNAs. The polypeptide is Large ribosomal subunit protein uL5 (Novosphingobium aromaticivorans (strain ATCC 700278 / DSM 12444 / CCUG 56034 / CIP 105152 / NBRC 16084 / F199)).